We begin with the raw amino-acid sequence, 448 residues long: Glucose-6-phosphate isomerase (448 aa).

The active-site Proton donor is the glutamate 290. Residues histidine 311 and lysine 425 contribute to the active site.

This sequence belongs to the GPI family.

The protein localises to the cytoplasm. The catalysed reaction is alpha-D-glucose 6-phosphate = beta-D-fructose 6-phosphate. It participates in carbohydrate biosynthesis; gluconeogenesis. It functions in the pathway carbohydrate degradation; glycolysis; D-glyceraldehyde 3-phosphate and glycerone phosphate from D-glucose: step 2/4. Catalyzes the reversible isomerization of glucose-6-phosphate to fructose-6-phosphate. The chain is Glucose-6-phosphate isomerase from Levilactobacillus brevis (strain ATCC 367 / BCRC 12310 / CIP 105137 / JCM 1170 / LMG 11437 / NCIMB 947 / NCTC 947) (Lactobacillus brevis).